The sequence spans 476 residues: Protein transport protein Sec61 subunit alpha-like 2 (476 aa).

The Cytoplasmic portion of the chain corresponds to 2–33 (AIKFLEVIKPFCAVLPEIQKPERRIQFKEKVL). A helical membrane pass occupies residues 34 to 53 (WTAITLFIFLVCCQIPLFGI). The Lumenal segment spans residues 54–76 (MSSDSADPFYWMRVIMASNRGTL). Residues 77–96 (MELGISPIVTSGLIMQLLAG) form a helical membrane-spanning segment. Over 97–117 (AKIIEVGDTPKDRALFNGAQK) the chain is Cytoplasmic. Residues 118 to 138 (LFGMIITIGQAVVYVMTGMYG) form a helical membrane-spanning segment. Residues 139-144 (DPSEMG) are Lumenal-facing. Residues 145-165 (AGICLLIIIQLFVAGLIVLLL) traverse the membrane as a helical segment. At 166 to 172 (DELLQKG) the chain is on the cytoplasmic side. A helical transmembrane segment spans residues 173-193 (YGLGSGISLFIATNICETIVW). The Lumenal portion of the chain corresponds to 194–240 (KAFSPTTVNTGRGTEFEGAIIALFHLLATRTDKVRALREAFYRQNLP). A helical transmembrane segment spans residues 241–261 (NLMNLIATIFVFAVVIYFQGF). At 262 to 288 (RVDLPIKSARYRGQYNTYPIKLFYTSN) the chain is on the cytoplasmic side. Residues 289 to 309 (IPIILQSALVSNLYVISQMLS) form a helical membrane-spanning segment. The Lumenal portion of the chain corresponds to 310-354 (TRFSGNFLVNLLGTWSDTSTGGPARAYPVGGLCYYLSPPESFGTV). A helical membrane pass occupies residues 355–375 (LEDPIHAIIYIIFMLGSCAFF). Over 376–420 (SKTWIEVSGSSAKDVAKQLKEQQMVMRGHRETSMVHELNRYIPTA) the chain is Cytoplasmic. The helical transmembrane segment at 421-441 (AAFGGLCIGGLSVMADFLGAI) threads the bilayer. At 442-445 (GSGT) the chain is on the lumenal side. The chain crosses the membrane as a helical span at residues 446–462 (GILLAVTIIYQYFEIFV). Residues 463–476 (KEQSEVGSVGALLF) lie on the Cytoplasmic side of the membrane.

It belongs to the SecY/SEC61-alpha family. The SEC61 channel-forming translocon complex consists of channel-forming core components SEC61A1, SEC61B and SEC61G and different auxiliary components such as SEC62 and SEC63.

The protein localises to the endoplasmic reticulum membrane. Functionally, component of SEC61 channel-forming translocon complex that mediates transport of signal peptide-containing precursor polypeptides across the endoplasmic reticulum (ER). Forms a ribosome receptor and a gated pore in the ER membrane, both functions required for cotranslational translocation of nascent polypeptides. This chain is Protein transport protein Sec61 subunit alpha-like 2 (sec61al2), found in Danio rerio (Zebrafish).